The chain runs to 34 residues: MSDIN-like toxin proprotein 7 (34 aa).

The propeptide occupies methionine 1 to proline 10. The cyclopeptide (Ala-Pro) cross-link spans alanine 11–proline 17. The propeptide occupies cysteine 18–cysteine 34.

The protein belongs to the MSDIN fungal toxin family. In terms of processing, processed by the macrocyclase-peptidase enzyme POPB to yield a toxic cyclic heptapeptide. POPB first removes 10 residues from the N-terminus. Conformational trapping of the remaining peptide forces the enzyme to release this intermediate rather than proceed to macrocyclization. The enzyme rebinds the remaining peptide in a different conformation and catalyzes macrocyclization of the N-terminal 7 residues. In terms of tissue distribution, expressed in basidiocarps.

Probable toxin that belongs to the MSDIN-like toxin family responsible for a large number of food poisoning cases and deaths. In Amanita exitialis (Guangzhou destroying angel), this protein is MSDIN-like toxin proprotein 7.